The chain runs to 282 residues: Protein N-terminal and lysine N-methyltransferase efm7 (282 aa).

Basic and acidic residues predominate over residues 1-13; that stretch reads MSKPEEVVNHVPE. The tract at residues 1–32 is disordered; sequence MSKPEEVVNHVPEDEGSDIEAGGLFEDPPDFY. Residues Trp-67, 93-95, Asp-115, Trp-152, and Ala-179 each bind S-adenosyl-L-methionine; that span reads GAA.

The protein belongs to the class I-like SAM-binding methyltransferase superfamily. EFM7 family.

Its subcellular location is the cytoplasm. In terms of biological role, S-adenosyl-L-methionine-dependent protein methyltransferase that trimethylates the N-terminal glycine 'Gly-2' of elongation factor 1-alpha, before also catalyzing the mono- and dimethylation of 'Lys-3'. This chain is Protein N-terminal and lysine N-methyltransferase efm7 (nnt-1), found in Neurospora crassa (strain ATCC 24698 / 74-OR23-1A / CBS 708.71 / DSM 1257 / FGSC 987).